Reading from the N-terminus, the 98-residue chain is Hainantoxin-XVII-2 (98 aa).

An N-terminal signal peptide occupies residues 1-40; it reads MTTVGVSLFRRSPEKITMKIATFLGLSFLLIASYVLICEA. Positions 41 to 64 are excised as a propeptide; sequence QHPGFQELLILEENMRDPENSKER. Intrachain disulfides connect Cys66/Cys81 and Cys73/Cys85.

It belongs to the hainantoxin family. 17 subfamily. In terms of tissue distribution, expressed by the venom gland.

It is found in the secreted. Putative ion channel inhibitor. This chain is Hainantoxin-XVII-2, found in Cyriopagopus hainanus (Chinese bird spider).